The primary structure comprises 203 residues: MANYYDITLALAGVCQAAKLVQQFAHEGQADQAAFETSLNTLLQIYPEDTLAVFGGKAQNLKLGLETLLEQMHGTGSDLSRYWISLLALESKLNKDPHAKAELARRIQYLPTQLEHYDLLDEQMLSTLASIYVDVISPLGKKIQVTGSTLYLQQLAMHHRIRACLLAGIRSAVLWRQVGGTKWQVLFSRRKIIAMAKQIYSSL.

This sequence belongs to the HflD family.

The protein localises to the cytoplasm. Its subcellular location is the cell inner membrane. This chain is High frequency lysogenization protein HflD homolog, found in Pasteurella multocida (strain Pm70).